The following is a 111-amino-acid chain: Ig kappa chain V-III region PC 2880/PC 1229 (111 aa).

The interval 1 to 23 (DIVLTQSPASLAVSLGQRATISC) is framework-1. C23 and C92 are oxidised to a cystine. The complementarity-determining-1 stretch occupies residues 24–38 (RASESVDNYGISFMN). The interval 39 to 53 (WFQQKPGQPPKLLIY) is framework-2. Residues 54–60 (AASNQGS) form a complementarity-determining-2 region. A framework-3 region spans residues 61–92 (GVPARFSGSGSGTDFSLNIHPMEEDDTAMYFC). The interval 93-101 (QQSKEVPWT) is complementarity-determining-3. Residues 102 to 111 (FGGGTKLEIK) form a framework-4 region.

The chain is Ig kappa chain V-III region PC 2880/PC 1229 from Mus musculus (Mouse).